The chain runs to 241 residues: GLIPR1-like protein 1 (241 aa).

The first 22 residues, 1–22 (MILRKKLSYLWTLGLCLVASKS), serve as a signal peptide directing secretion. An SCP domain is found at 39 to 172 (LRLHNEARTN…PDSALLVCNY (134 aa)). A lipid anchor (GPI-anchor amidated serine) is attached at Ser220. A propeptide spans 221–241 (GTRQLIACNPLYLISVLLTIF) (removed in mature form).

Belongs to the CRISP family. Part of a oolemmal binding multimeric complex (IZUMO1 complex) composed at least of IZUMO1 and GLIPR1L1; the complex assemblage is influenced by the maturation status of the male germ cell. Interacts with IZUMO1. In terms of processing, N-glycosylated. N-glycosylation decreases during the transit in the caput. In terms of tissue distribution, highly expressed in testis, where it localizes to round and elongating spermatids and differentiated spermatozoa in the seminiferous tubules and epididymis (at protein level).

The protein localises to the cytoplasmic vesicle. Its subcellular location is the secretory vesicle. It is found in the acrosome. The protein resides in the cell membrane. It localises to the membrane raft. In terms of biological role, required for optimal fertilization at the stage of sperm-oocyte fusion, plays a role in optimizing acrosome function, the translocation of IZUMO1 during the acrosome reaction and the fertilization process. Component of epididymosomes, one type of membranous microvesicules which mediate the transfer of lipids and proteins to spermatozoa plasma membrane during epididymal maturation. Also a component of the CD9-positive microvesicules found in the cauda region. The chain is GLIPR1-like protein 1 from Bos taurus (Bovine).